The primary structure comprises 238 residues: Probable transcriptional regulatory protein CF0838 (238 aa).

The protein belongs to the TACO1 family.

It is found in the cytoplasm. The polypeptide is Probable transcriptional regulatory protein CF0838 (Chlamydia felis (strain Fe/C-56) (Chlamydophila felis)).